The chain runs to 551 residues: Enhancer of mRNA-decapping protein 3 (551 aa).

One can recognise a Sm domain in the interval 1-63 (MSQFVGFGVQ…LKDLKVLTVA (63 aa)). The interval 64 to 92 (SQSGKRKQQRQQQQQNDYNQNRGEHIDWQ) is disordered. The 37-residue stretch at 93 to 129 (DDDVSKIKQQEDFDFQRNLGMFNKKDVFAQLKQNDDI) folds into the DFDF domain. Phosphoserine occurs at positions 257 and 261. The 240-residue stretch at 288-527 (VQLLEMESIT…DIGIPQGAYS (240 aa)) folds into the YjeF N-terminal domain.

It belongs to the EDC3 family. As to quaternary structure, homodimer. Interacts with DCP2.

The protein resides in the cytoplasm. Its subcellular location is the P-body. Stimulates decapping of both stable and unstable mRNA during mRNA decay. Does not affect nonsense-mediated mRNA decay. Required for normal P-body assembly. The sequence is that of Enhancer of mRNA-decapping protein 3 (EDC3) from Saccharomyces cerevisiae (strain ATCC 204508 / S288c) (Baker's yeast).